Reading from the N-terminus, the 187-residue chain is Ras-like protein rasD (187 aa).

Residue 10-17 (GGGGVGKS) coordinates GTP. Positions 32–40 (YDPTIEDSY) match the Effector region motif. Residues 57–61 (DTAGQ) and 116–119 (NKAD) contribute to the GTP site. C184 is subject to Cysteine methyl ester. Residue C184 is the site of S-geranylgeranyl cysteine attachment. Residues 185 to 187 (LIL) constitute a propeptide, removed in mature form.

Belongs to the small GTPase superfamily. Ras family.

Its subcellular location is the cell membrane. The catalysed reaction is GTP + H2O = GDP + phosphate + H(+). Its activity is regulated as follows. Alternates between an inactive form bound to GDP and an active form bound to GTP. Activated by a guanine nucleotide-exchange factor (GEF) and inactivated by a GTPase-activating protein (GAP). Ras proteins bind GDP/GTP and possess intrinsic GTPase activity. This is Ras-like protein rasD (rasD) from Dictyostelium discoideum (Social amoeba).